A 363-amino-acid chain; its full sequence is Peptide chain release factor 1 (363 aa).

Q237 carries the N5-methylglutamine modification. Basic and acidic residues predominate over residues 286-295 (EKRRSAEATT). The tract at residues 286–305 (EKRRSAEATTRRNLVGSGDR) is disordered.

It belongs to the prokaryotic/mitochondrial release factor family. Methylated by PrmC. Methylation increases the termination efficiency of RF1.

The protein localises to the cytoplasm. Functionally, peptide chain release factor 1 directs the termination of translation in response to the peptide chain termination codons UAG and UAA. This is Peptide chain release factor 1 from Shewanella amazonensis (strain ATCC BAA-1098 / SB2B).